Reading from the N-terminus, the 82-residue chain is UPF0180 protein BC_1394 (82 aa).

The protein belongs to the UPF0180 family.

This chain is UPF0180 protein BC_1394, found in Bacillus cereus (strain ATCC 14579 / DSM 31 / CCUG 7414 / JCM 2152 / NBRC 15305 / NCIMB 9373 / NCTC 2599 / NRRL B-3711).